The following is a 456-amino-acid chain: Solute carrier family 49 member 4 homolog (456 aa).

The Cytoplasmic segment spans residues 1–29 (MGLEWSSPGERQPLLYPGGPRAPRVFGRR). Residues 14–15 (LL) carry the Di-leucine motif; mediates lysosomal localization motif. The chain crosses the membrane as a helical span at residues 30 to 50 (WLVLLLFSLLAFLQGLVWNSW). Residues 51-67 (GPIQNSARTAYNFSGLD) lie on the Lumenal side of the membrane. N62 carries N-linked (GlcNAc...) asparagine glycosylation. The chain crosses the membrane as a helical span at residues 68–88 (IALLVLWGPIGFLPCFLFMWL). Residues 89–95 (MDNRGLR) are Cytoplasmic-facing. The chain crosses the membrane as a helical span at residues 96–116 (VTVLLTALLMVLGAGLRCVPV). Residues 117–131 (QDLAVRRKLIHGGQL) lie on the Lumenal side of the membrane. Residues 132-152 (LNGFAGPTVMNAAPFLSTTWF) form a helical membrane-spanning segment. At 153–162 (SPDERATATA) the chain is on the cytoplasmic side. Residues 163–183 (IASMLSYLGGACAFLVGPLVV) form a helical membrane-spanning segment. Residues 184–207 (PAPNSTSGLLLYSGSVGAIRDRIE) are Lumenal-facing. N187 is a glycosylation site (N-linked (GlcNAc...) asparagine). The chain crosses the membrane as a helical span at residues 208 to 228 (AVMYAEFGIIFVVFAAILAYF). Residues 229-259 (PSRPPVPPSVAAASRRLSYRTSILRLLSNVR) lie on the Cytoplasmic side of the membrane. Residues 260–280 (FLLIVLAYAIPLGFYAGWSGV) form a helical membrane-spanning segment. Topologically, residues 281-292 (LDLILTPVHVTQ) are lumenal. A helical membrane pass occupies residues 293-313 (VDAGWVGFWSIVGGCVVGIAV). Residues 314–326 (GRFADSIRGVLKP) lie on the Cytoplasmic side of the membrane. The helical transmembrane segment at 327-347 (ILLLLFSGAALSSTWFTLTFL) threads the bilayer. Residues 348-362 (SNVTHLPLTTATLYT) lie on the Lumenal side of the membrane. N349 carries an N-linked (GlcNAc...) asparagine glycan. Residues 363 to 383 (SCILIGVFLSGTVPIFFEMFV) form a helical membrane-spanning segment. The Cytoplasmic segment spans residues 384-392 (ETVYPIPEG). A helical transmembrane segment spans residues 393–413 (ITCGVVTFLSNLFMGVLLLFL). The Lumenal portion of the chain corresponds to 414–420 (TLYQTNL). N-linked (GlcNAc...) asparagine glycosylation is present at N419. A helical transmembrane segment spans residues 421–441 (SWLNWCLTGSCFLSLLFIACF). At 442 to 456 (RESYDRLYLDVFVSV) the chain is on the cytoplasmic side.

It belongs to the major facilitator superfamily.

The protein localises to the lysosome membrane. It catalyses the reaction pyridoxine(out) + n H(+)(out) = pyridoxine(in) + n H(+)(in). Functionally, mediates H(+)-dependent pyridoxine transport. This is Solute carrier family 49 member 4 homolog (slc49a4) from Xenopus tropicalis (Western clawed frog).